Here is a 401-residue protein sequence, read N- to C-terminus: Phosrestin-1 (401 aa).

Ser-366 carries the phosphoserine; by CaMK modification.

It belongs to the arrestin family. Phosphorylated upon light exposure. In terms of tissue distribution, expressed in photoreceptor cells.

Its subcellular location is the cell projection. The protein localises to the rhabdomere. Regulates photoreceptor cell deactivation. Arr1 and Arr2 proteins are mediators of rhodopsin inactivation and are essential for the termination of the phototransduction cascade. Involved in regulating normal cycles of per nuclear accumulation in brain circadian neurons and thus is important for normal circadian behavior. In the dark, functions with Arr1 to promote the formation of cytosolic Bdbt foci, which are required for dco localization to photoreceptor nuclei where it phosphorylates and activates degradation of per. This Drosophila melanogaster (Fruit fly) protein is Phosrestin-1 (Arr2).